A 407-amino-acid chain; its full sequence is Peptidase T (407 aa).

Residue His78 coordinates Zn(2+). Residue Asp80 is part of the active site. Position 139 (Asp139) interacts with Zn(2+). Glu173 acts as the Proton acceptor in catalysis. Zn(2+) is bound by residues Glu174, Asp196, and His378.

It belongs to the peptidase M20B family. It depends on Zn(2+) as a cofactor.

The protein resides in the cytoplasm. The catalysed reaction is Release of the N-terminal residue from a tripeptide.. Functionally, cleaves the N-terminal amino acid of tripeptides. The polypeptide is Peptidase T (Shewanella pealeana (strain ATCC 700345 / ANG-SQ1)).